The sequence spans 323 residues: MAGRAVVKGVGHYLPERVVPNAAFEKTLDTTDEWIRSRSGIERRHFAAEGETTSDLATRAAEAALADAGISAEQIDAIVLATSTADLTFPSAATMVQARLGMTNGYAFDVQAVCAGFVYALSNANALIVSGQAKRVLVIGAETFSRIMDWTDRSTCVLFGDGAGALVLEYEEGEGTPQDRGILSVDLNSDGRYKDLLYVDGGVSTQTTGHLRMQGNQVFRHAVEKLAQTAETALDKAGLSSADVDWIVPHQANIRIIQGTAKKMGLPMDKVVVTVQDHGNTSAASIPLALSVGKARGQIKTGDLVVTEAIGGGLAWGAVVLRW.

Residues Cys-114 and His-250 contribute to the active site. Residues 251–255 (QANIR) form an ACP-binding region. Residue Asn-280 is part of the active site.

This sequence belongs to the thiolase-like superfamily. FabH family. Homodimer.

Its subcellular location is the cytoplasm. It carries out the reaction malonyl-[ACP] + acetyl-CoA + H(+) = 3-oxobutanoyl-[ACP] + CO2 + CoA. The protein operates within lipid metabolism; fatty acid biosynthesis. Functionally, catalyzes the condensation reaction of fatty acid synthesis by the addition to an acyl acceptor of two carbons from malonyl-ACP. Catalyzes the first condensation reaction which initiates fatty acid synthesis and may therefore play a role in governing the total rate of fatty acid production. Possesses both acetoacetyl-ACP synthase and acetyl transacylase activities. Its substrate specificity determines the biosynthesis of branched-chain and/or straight-chain of fatty acids. This chain is Beta-ketoacyl-[acyl-carrier-protein] synthase III, found in Ruegeria pomeroyi (strain ATCC 700808 / DSM 15171 / DSS-3) (Silicibacter pomeroyi).